The sequence spans 531 residues: CTP synthase (531 aa).

The segment at 1-267 (MTKYIFVTGG…DQIVCEHLRL (267 aa)) is amidoligase domain. Ser13 contributes to the CTP binding site. Ser13 lines the UTP pocket. Residue 14-19 (SLGKGI) participates in ATP binding. Tyr54 contributes to the L-glutamine binding site. Asp71 lines the ATP pocket. Residues Asp71 and Glu141 each contribute to the Mg(2+) site. Residues 148 to 150 (DIE), 188 to 193 (KTKPTQ), and Lys224 each bind CTP. Residues 188–193 (KTKPTQ) and Lys224 each bind UTP. 240-242 (RDA) contributes to the ATP binding site. Residues 292-531 (KIALVGKYVE…REFVRASLKE (240 aa)) enclose the Glutamine amidotransferase type-1 domain. Gly354 is an L-glutamine binding site. Cys381 serves as the catalytic Nucleophile; for glutamine hydrolysis. L-glutamine-binding positions include 382–385 (LGMQ), Glu405, and Arg462. Residues His507 and Glu509 contribute to the active site.

Belongs to the CTP synthase family. In terms of assembly, homotetramer.

The enzyme catalyses UTP + L-glutamine + ATP + H2O = CTP + L-glutamate + ADP + phosphate + 2 H(+). It catalyses the reaction L-glutamine + H2O = L-glutamate + NH4(+). The catalysed reaction is UTP + NH4(+) + ATP = CTP + ADP + phosphate + 2 H(+). Its pathway is pyrimidine metabolism; CTP biosynthesis via de novo pathway; CTP from UDP: step 2/2. Allosterically activated by GTP, when glutamine is the substrate; GTP has no effect on the reaction when ammonia is the substrate. The allosteric effector GTP functions by stabilizing the protein conformation that binds the tetrahedral intermediate(s) formed during glutamine hydrolysis. Inhibited by the product CTP, via allosteric rather than competitive inhibition. In terms of biological role, catalyzes the ATP-dependent amination of UTP to CTP with either L-glutamine or ammonia as the source of nitrogen. Regulates intracellular CTP levels through interactions with the four ribonucleotide triphosphates. The chain is CTP synthase from Geobacillus kaustophilus (strain HTA426).